We begin with the raw amino-acid sequence, 412 residues long: Lipid droplet organization protein LDO45 (412 aa).

Residues 1–170 (MAARNRRKNN…TVEKLNALQN (170 aa)) lie on the Cytoplasmic side of the membrane. Residues 171–191 (SLYEVFWIIFIYLNYWFPNVG) traverse the membrane as a helical segment. Topologically, residues 192–247 (DYVSNTFGQQDSIIIRISLSKSHFRALREKSSQKVQQAVKNIYFCFQEKPYLTAFK) are lumenal. A helical membrane pass occupies residues 248 to 268 (VSFAIGLVIPCSLLFLIMVST). Residues 269-271 (ATF) lie on the Cytoplasmic side of the membrane. Residues 272-292 (FFFVYLTLFVVIGFFSSLFII) form a helical membrane-spanning segment. A topological domain (lumenal) is located at residue Pro293. Residues 294 to 314 (LLGISFVFAIGVVSFGFCSNM) form a helical membrane-spanning segment. At 315–412 (SFKMAQLIYV…NKAGNKFQLS (98 aa)) the chain is on the cytoplasmic side. Residues 347 to 374 (QEPQEPLSTLRPVSNPTIPSPLRQTARP) form a disordered region. Polar residues predominate over residues 357-373 (RPVSNPTIPSPLRQTAR).

Interacts specifically with the seipin complex FLD1-LDB16. Only a fraction appears to associate with the seipin core components, suggesting that it may be an ancillary subunit of the complex.

Its subcellular location is the endoplasmic reticulum membrane. It is found in the lipid droplet. In terms of biological role, involved in lipid droplet (LD) organization. Modulates triglyceride (TAG) storage by reducing DGA1 LD localization. Promotes LD targeting of some proteins, including PDR16. The sequence is that of Lipid droplet organization protein LDO45 from Saccharomyces cerevisiae (strain ATCC 204508 / S288c) (Baker's yeast).